The following is a 551-amino-acid chain: BAG family molecular chaperone regulator 8, chloroplastic (551 aa).

Residues 1–19 (MASHHHHNHNHVCSRHQNH) are compositionally biased toward basic residues. A disordered region spans residues 1–46 (MASHHHHNHNHVCSRHQNHHNNTPQFATSPNCCNKSNHPSPPPAED). The transit peptide at 1 to 52 (MASHHHHNHNHVCSRHQNHHNNTPQFATSPNCCNKSNHPSPPPAEDNLLHLV) directs the protein to the chloroplast. Over residues 20-38 (HNNTPQFATSPNCCNKSNH) the composition is skewed to polar residues. One can recognise an IQ domain in the interval 131 to 160 (RDSAARVIQTHFRSYLVHRSISFRQLKELA). In terms of domain architecture, BAG spans 147–228 (VHRSISFRQL…RFVQYVDDCV (82 aa)). The segment at 246 to 281 (GKKPQGFGTSSEDEDNNADMSDDSEEVPVSSIDKRK) is disordered. Over residues 256–271 (SEDEDNNADMSDDSEE) the composition is skewed to acidic residues. Serine 332 is modified (phosphoserine). 2 disordered regions span residues 414–433 (DEGK…KGSG) and 450–551 (NVYK…KMEP). The span at 479 to 499 (GEEKGNVNEVEEIKYVPKENE) shows a compositional bias: basic and acidic residues. Acidic residues predominate over residues 500 to 513 (SFEEEEEKETDSEN). Over residues 522–534 (EGDKRVTKKEVQH) the composition is skewed to basic and acidic residues.

Binds to the ATPase domain of HSP70/HSC70 chaperones.

The protein localises to the plastid. It is found in the chloroplast. Its function is as follows. Co-chaperone that regulates diverse cellular pathways, such as programmed cell death and stress responses. This chain is BAG family molecular chaperone regulator 8, chloroplastic (BAG1), found in Arabidopsis thaliana (Mouse-ear cress).